A 187-amino-acid polypeptide reads, in one-letter code: Protein dj-1beta (187 aa).

The residue at position 45 (C45) is a Cysteine sulfinic acid (-SO2H). C104 functions as the Nucleophile in the catalytic mechanism. Position 104 is a cysteine sulfinic acid (-SO2H); alternate (C104).

Oxidation of Cys-45 and Cys-104 in response to oxidative stress. Levels of oxidation increase with age. In terms of tissue distribution, expressed in the head and testis (at protein level). Ubiquitously expressed at constant levels.

Its subcellular location is the mitochondrion. It is found in the cytoplasm. The protein resides in the nucleus. Its function is as follows. Plays an important role in cell protection against oxidative stress and cell death by acting as a oxidative stress sensor. Does not play a role in methylglyoxal detoxification. Plays a role in mitochondrial function together with Pink1. In motor neurons regulates structural synaptic plasticity of locomotor behavior as part of the PTEN-phosphatidylinositol 3-kinase pathway in response to oxygen species (ROS) levels. The chain is Protein dj-1beta from Drosophila melanogaster (Fruit fly).